The sequence spans 1535 residues: ABC multidrug transporter atrF (1535 aa).

The disordered stretch occupies residues 1 to 115 (MADDHRQPEA…DEQASSTDEY (115 aa)). An N-linked (GlcNAc...) asparagine glycan is attached at Asn33. Residues 34-45 (TTSTSETDASAD) show a composition bias toward low complexity. Basic and acidic residues predominate over residues 46–76 (ADARWGERNQGDPVSRRGAMEEFEEMRREVT). Residues 79–93 (SLHRTRSAKDARRRS) show a composition bias toward basic residues. 4 N-linked (GlcNAc...) asparagine glycosylation sites follow: Asn149, Asn274, Asn287, and Asn351. The region spanning 185–427 (VPALHFGKRP…FVDLGFYCPE (243 aa)) is the ABC transporter 1 domain. 7 consecutive transmembrane segments (helical) span residues 540–560 (LYTK…LFYG), 573–593 (GALF…MPAV), 618–638 (VVVD…IVYF), 646–666 (ASKF…ITSL), 680–700 (AVRF…YVIP), 703–723 (GLID…LSYS), and 791–811 (FGVV…AAEV). The disordered stretch occupies residues 834–868 (KAQNGKGNDEEQVQNTGDNAALSRGEAKSSSSGEA). In terms of domain architecture, ABC transporter 2 spans 879-1117 (FTWSNVEYTV…DVIKYFADRG (239 aa)). Asn892 carries N-linked (GlcNAc...) asparagine glycosylation. 915 to 922 (GASGAGKT) serves as a coordination point for ATP. The next 6 helical transmembrane spans lie at 1212–1232 (YGKL…FWML), 1246–1266 (IFLI…KFYI), 1295–1315 (IPMA…PVGF), 1320–1340 (SSAG…ASWG), 1342–1362 (WICA…FFFV), and 1384–1406 (WMYY…FPSV). The N-linked (GlcNAc...) asparagine glycan is linked to Asn1459. 2 helical membrane-spanning segments follow: residues 1477–1497 (CFGI…FFIY) and 1503–1523 (GWSF…EGVK).

The protein belongs to the ABC transporter superfamily. ABCG family. PDR (TC 3.A.1.205) subfamily.

It is found in the cell membrane. It catalyses the reaction voriconazole(in) + ATP + H2O = voriconazole(out) + ADP + phosphate + H(+). Functionally, pleiotropic ABC efflux transporter involved in the basal level of azole susceptibility. Confers resistance to voriconazole. This chain is ABC multidrug transporter atrF, found in Aspergillus flavus (strain ATCC 200026 / FGSC A1120 / IAM 13836 / NRRL 3357 / JCM 12722 / SRRC 167).